Reading from the N-terminus, the 454-residue chain is Golgi reassembly-stacking protein 2 (454 aa).

Gly2 is lipidated: N-myristoyl glycine. 2 consecutive PDZ GRASP-type domains span residues 15–105 and 111–199; these read EGYH…FCSF and NVWH…YGYL. The GRASP stretch occupies residues 15 to 215; the sequence is EGYHVLRVQE…PFEEGKKISL (201 aa). 2 positions are modified to dimethylated arginine: Arg30 and Arg47. Residues 194-199 are important for membrane binding; it reads IGYGYL. Phosphoserine is present on Ser214. Thr222 carries the post-translational modification Phosphothreonine. Thr225 is modified (phosphothreonine; by MAPK). The segment at 377–454 is disordered; that stretch reads EGSSAASAGE…VTDANASGAS (78 aa). Phosphoserine is present on Ser411. Thr435 is modified (phosphothreonine). Phosphoserine occurs at positions 443 and 451.

Belongs to the GORASP family. As to quaternary structure, homodimer. Homooligomer. ER stress induces phosphorylation-dependent monomerization. Interacts with BLZF1/Golgin 45. Identified in a complex with RAB2 and GORASP2. Interacts with JAM2 and JAM3. Interacts with members of the p24 cargo receptors. Interacts with CNIH1 and the cytoplasmic domain of transmembrane TGFA, prior its transit in the trans-Golgi. Interacts with KCTD5. Interacts with TMED2 and TMED3. Interacts with SEC16A in response to ER stress. Interacts (via PDZ GRASP-type 1 domain) with core-glycosylated CFTR in response to ER stress. In terms of processing, myristoylated. Myristoylation is essential for the Golgi targeting. Post-translationally, palmitoylated. Phosphorylated in mitotic cells. ER stress-induced phosphorylation at Ser-443 induces monomerization and subsequent relocalization from Golgi to ER which is essential for mediating unconventional (ER/Golgi-independent) trafficking of CFTR to the cell membrane. In terms of tissue distribution, detected in lung, brain, heart, liver and testis.

Its subcellular location is the golgi apparatus membrane. The protein localises to the endoplasmic reticulum membrane. It is found in the golgi apparatus. Key structural protein of the Golgi apparatus. The membrane cisternae of the Golgi apparatus adhere to each other to form stacks, which are aligned side by side to form the Golgi ribbon. Acting in concert with GORASP1/GRASP65, is required for the formation and maintenance of the Golgi ribbon, and may be dispensable for the formation of stacks. However, other studies suggest that GORASP2 plays a role in the assembly and membrane stacking of the Golgi cisternae, and in the process by which Golgi stacks reform after breakdown during mitosis and meiosis. May regulate the intracellular transport and presentation of a defined set of transmembrane proteins, such as transmembrane TGFA. Required for normal acrosome formation during spermiogenesis and normal male fertility, probably by promoting colocalization of JAM2 and JAM3 at contact sites between germ cells and Sertoli cells. Mediates ER stress-induced unconventional (ER/Golgi-independent) trafficking of core-glycosylated CFTR to cell membrane. This Rattus norvegicus (Rat) protein is Golgi reassembly-stacking protein 2 (Gorasp2).